Here is a 203-residue protein sequence, read N- to C-terminus: Probable GTP-binding protein EngB (203 aa).

In terms of domain architecture, EngB-type G spans 1 to 190; the sequence is MPEIVLVGRS…LEALQERVRK (190 aa). GTP is bound by residues 8–15, 35–39, 53–56, 132–135, and 169–171; these read GRSNVGKS, GVTRK, DMPG, NKID, and ISA. Residues Ser-15 and Thr-37 each contribute to the Mg(2+) site.

Belongs to the TRAFAC class TrmE-Era-EngA-EngB-Septin-like GTPase superfamily. EngB GTPase family. The cofactor is Mg(2+).

Necessary for normal cell division and for the maintenance of normal septation. The polypeptide is Probable GTP-binding protein EngB (Methanopyrus kandleri (strain AV19 / DSM 6324 / JCM 9639 / NBRC 100938)).